The sequence spans 588 residues: Peptidoglycan D,D-transpeptidase FtsI (588 aa).

A helical membrane pass occupies residues 19 to 39 (FISWRFALLCGCILLALAFLL). Ser-307 functions as the Acyl-ester intermediate in the catalytic mechanism. The propeptide occupies 578 to 588 (INQGEGTGGRS).

The protein belongs to the transpeptidase family. FtsI subfamily.

It is found in the cell inner membrane. It catalyses the reaction Preferential cleavage: (Ac)2-L-Lys-D-Ala-|-D-Ala. Also transpeptidation of peptidyl-alanyl moieties that are N-acyl substituents of D-alanine.. It participates in cell wall biogenesis; peptidoglycan biosynthesis. In terms of biological role, catalyzes cross-linking of the peptidoglycan cell wall at the division septum. This Escherichia coli O157:H7 protein is Peptidoglycan D,D-transpeptidase FtsI.